A 213-amino-acid chain; its full sequence is Imidazole glycerol phosphate synthase subunit HisH (213 aa).

Residues 4–213 (SIAIVDYGMG…LYRNFVHWKP (210 aa)) form the Glutamine amidotransferase type-1 domain. Catalysis depends on cysteine 83, which acts as the Nucleophile. Catalysis depends on residues histidine 193 and glutamate 195.

Heterodimer of HisH and HisF.

It is found in the cytoplasm. The enzyme catalyses 5-[(5-phospho-1-deoxy-D-ribulos-1-ylimino)methylamino]-1-(5-phospho-beta-D-ribosyl)imidazole-4-carboxamide + L-glutamine = D-erythro-1-(imidazol-4-yl)glycerol 3-phosphate + 5-amino-1-(5-phospho-beta-D-ribosyl)imidazole-4-carboxamide + L-glutamate + H(+). It catalyses the reaction L-glutamine + H2O = L-glutamate + NH4(+). It participates in amino-acid biosynthesis; L-histidine biosynthesis; L-histidine from 5-phospho-alpha-D-ribose 1-diphosphate: step 5/9. Its function is as follows. IGPS catalyzes the conversion of PRFAR and glutamine to IGP, AICAR and glutamate. The HisH subunit catalyzes the hydrolysis of glutamine to glutamate and ammonia as part of the synthesis of IGP and AICAR. The resulting ammonia molecule is channeled to the active site of HisF. The sequence is that of Imidazole glycerol phosphate synthase subunit HisH from Burkholderia lata (strain ATCC 17760 / DSM 23089 / LMG 22485 / NCIMB 9086 / R18194 / 383).